We begin with the raw amino-acid sequence, 492 residues long: Monocarboxylate transporter 3 (492 aa).

Residues 1–14 (MGAGGPRRGAGPPD) lie on the Cytoplasmic side of the membrane. A helical transmembrane segment spans residues 15-35 (GGWGWVVLGACFVVTGFAYGF). The Extracellular portion of the chain corresponds to 36-58 (PKAVSVFFRELKRDFGAGYSDTA). Residues 59–79 (WVSSIMLAMLYGTGPLSSILV) form a helical membrane-spanning segment. At 80–85 (TRFGCR) the chain is on the cytoplasmic side. The chain crosses the membrane as a helical span at residues 86–106 (PVMLAGGLLASAGMILASFAS). Residues 107 to 115 (RLVELYLTA) are Extracellular-facing. A helical membrane pass occupies residues 116–136 (GVLTGLGLALNFQPSLIMLGL). The Cytoplasmic segment spans residues 137–146 (YFERRRPLAN). A helical membrane pass occupies residues 147–167 (GLAAAGSPVFLSMLSPLGQLL). The Extracellular portion of the chain corresponds to 168 to 172 (GERFG). The helical transmembrane segment at 173-193 (WRGGFLLFGGLLLHCCACGAV) threads the bilayer. At 194–228 (MRPPPGPPPRRDPSPHGGPARRRRLLDVAVCTDRA) the chain is on the cytoplasmic side. The chain crosses the membrane as a helical span at residues 229 to 249 (FVVYVVTKFLMALGLFVPAIL). The Extracellular segment spans residues 250–257 (LVNYAKDA). Residues 258–278 (GVPDAEAAFLLSIVGFVDIVA) form a helical membrane-spanning segment. Over 279–293 (RPACGALAGLGRLRP) the chain is Cytoplasmic. The chain crosses the membrane as a helical span at residues 294-314 (HVPYLFSLALLANGLTDLISA). Topologically, residues 315–318 (RARS) are extracellular. A helical membrane pass occupies residues 319–339 (YGTLVAFCIAFGLSYGMVGAL). Topologically, residues 340–352 (QFEVLMATVGAPR) are cytoplasmic. Residues 353–373 (FPSALGLVLLVEAVAVLIGPP) traverse the membrane as a helical segment. The Extracellular portion of the chain corresponds to 374–386 (SAGRLVDALKNYE). A helical membrane pass occupies residues 387 to 407 (IIFYLAGSEVALAGVFMAVTT). Residues 408–492 (YCCLRCSKNI…GGHEARGQKA (85 aa)) lie on the Cytoplasmic side of the membrane. The interval 419 to 492 (SGRSAEGGAS…GGHEARGQKA (74 aa)) is disordered. Basolateral sorting signal stretches follow at residues 426–460 (GASD…VLSP) and 461–482 (RAGS…HESI). Residues 476 to 492 (ELDHESIGGHEARGQKA) show a composition bias toward basic and acidic residues.

Belongs to the major facilitator superfamily. Monocarboxylate porter (TC 2.A.1.13) family. In terms of tissue distribution, expressed exclusively in retinal pigment epithelium and choroid plexus epithelium.

The protein localises to the basolateral cell membrane. The catalysed reaction is (S)-lactate(in) + H(+)(in) = (S)-lactate(out) + H(+)(out). Functionally, probable retinal pigment epithelium (RPE)-specific proton-coupled L-lactate transporter. May facilitate transport of lactate and H(+) out of the retina and could therefore play an essential role in maintenance of metabolic and ionic homeostasis of the outer retina. The polypeptide is Monocarboxylate transporter 3 (Slc16a8) (Mus musculus (Mouse)).